Here is a 570-residue protein sequence, read N- to C-terminus: Formate--tetrahydrofolate ligase (570 aa).

65-72 (TPFGEGKT) contacts ATP.

This sequence belongs to the formate--tetrahydrofolate ligase family.

It carries out the reaction (6S)-5,6,7,8-tetrahydrofolate + formate + ATP = (6R)-10-formyltetrahydrofolate + ADP + phosphate. It functions in the pathway one-carbon metabolism; tetrahydrofolate interconversion. The polypeptide is Formate--tetrahydrofolate ligase (Shewanella sediminis (strain HAW-EB3)).